Here is a 160-residue protein sequence, read N- to C-terminus: Myosin catalytic light chain LC-1, mantle muscle (160 aa).

Position 1 is a blocked amino end (Xaa) (X1). 3 consecutive EF-hand domains span residues 7-44 (DEIE…LGMN), 83-118 (TAAD…LGER), and 119-153 (ITED…VMAG).

Its function is as follows. In molluscan muscle, calcium regulation is associated with myosin rather than with actin. Muscle myosin contains two types of light chains: the catalytic light chain, essential for ATPase activity, and the regulatory light chain, a calcium-binding protein responsible for Ca(2+) dependent binding and Ca(2+) dependent Mg-ATPase activity. The protein is Myosin catalytic light chain LC-1, mantle muscle of Todarodes pacificus (Japanese flying squid).